Here is a 124-residue protein sequence, read N- to C-terminus: Small ribosomal subunit protein uS13 (124 aa).

Residues 95 to 124 form a disordered region; sequence GLPVRGQRTKTNARTRKGPKRTIAGKKKAK.

This sequence belongs to the universal ribosomal protein uS13 family. In terms of assembly, part of the 30S ribosomal subunit. Forms a loose heterodimer with protein S19. Forms two bridges to the 50S subunit in the 70S ribosome.

Its function is as follows. Located at the top of the head of the 30S subunit, it contacts several helices of the 16S rRNA. In the 70S ribosome it contacts the 23S rRNA (bridge B1a) and protein L5 of the 50S subunit (bridge B1b), connecting the 2 subunits; these bridges are implicated in subunit movement. Contacts the tRNAs in the A and P-sites. The polypeptide is Small ribosomal subunit protein uS13 (Rhodococcus jostii (strain RHA1)).